The sequence spans 559 residues: Methionine--tRNA ligase (559 aa).

The 'HIGH' region signature appears at 10 to 20 (PYINAVPHLGT). Positions 141, 144, 154, and 157 each coordinate Zn(2+). The short motif at 331–335 (KFSKS) is the 'KMSKS' region element. Lys334 contacts ATP.

This sequence belongs to the class-I aminoacyl-tRNA synthetase family. MetG type 1 subfamily. The cofactor is Zn(2+).

The protein resides in the cytoplasm. The catalysed reaction is tRNA(Met) + L-methionine + ATP = L-methionyl-tRNA(Met) + AMP + diphosphate. In terms of biological role, is required not only for elongation of protein synthesis but also for the initiation of all mRNA translation through initiator tRNA(fMet) aminoacylation. The chain is Methionine--tRNA ligase from Korarchaeum cryptofilum (strain OPF8).